Consider the following 831-residue polypeptide: MPSHSRSRDRYRGERDPSRRYREVYDDDDDDDFDYHPRERRRYRRDDYQHDIRSHESPNYNDDLNEYDAAAEDPAVPLRSHDVEGRRRERSRAGESPIASPSRRDRNRGGEEYRRHGTYGDGGSPTRAMRDRRHRSRDGQRARPRDMDREARRQRRRERARGAAAMKHKSSDSTNSGSHLLSADALAKLRSHYDEEDQRERSQEQEQPRLESKRQRKRPIVGDEPQALAPFPDETPRGQSKGRIVSGAYLEEGHPEMEVRHRGGGGPAMEARWRKEGNWDGTMEGSDAQPPFWKRKKWWIVIGVLVVVLAIVIPVAVVMSKKHGHDDDKSGSSSSVDNSDSPYISSLDGLSHDSIPESAQGSILDPWTWYDTRDFNLTFTNETVGGLPIMGLNSTWDDSTRPNDNVPPLNESFPYGSQPIRGVNLGGWLSIEPFIVPSLFENYSSKDRIIDEYTLCKKLGSSAASTIEKHYADFISEQDFIDMRDAGLDHVRIQFSYWAVTTYDDDPYVAKISWRYLLRAIEYCRKYGLRVNLDPHGIPGSQNGWNHSGREGVIGWLNGTDGQLNRQRSLDFHNQISQFFAQPRYKNVVTIYGLVNEPLMLSLPVEDVLNWTTDATKLVQKNGISAYVTVHDGFLNLSKWKQMLKDRPDRMFLDTHQYTIFNTGQIVLNHTDRVKLICNDWYNMIKEINTTSAGWGPTICGEWSQADTDCAQYLNNVGRGTRWEGTFAIGDSTVYCPTADTGPTCSCASANAPPADYSDGYKKFLQTYAEAQMSAFGTAQGWFYWTWHTESAAQWSYKTAWKNGYMPKKAYAPDFKCGDDIPSFGDLPEYY.

Basic and acidic residues-rich tracts occupy residues M1–V24, R44–E56, R79–A93, S102–R115, R137–A151, and Q198–K213. Disordered regions lie at residues M1–H179 and H192–K241. Residues M1–K297 are Cytoplasmic-facing. The chain crosses the membrane as a helical; Signal-anchor for type II membrane protein span at residues W298–V318. Topologically, residues M319–Y831 are extracellular. 7 N-linked (GlcNAc...) asparagine glycosylation sites follow: N376, N381, N393, N410, N442, N546, and N558. The Proton donor role is filled by E597. N-linked (GlcNAc...) asparagine glycans are attached at residues N610, N636, N669, and N689. E702 functions as the Nucleophile in the catalytic mechanism.

This sequence belongs to the glycosyl hydrolase 5 (cellulase A) family.

It is found in the cell membrane. The catalysed reaction is Successive hydrolysis of beta-D-glucose units from the non-reducing ends of (1-&gt;3)-beta-D-glucans, releasing alpha-glucose.. In terms of biological role, glucosidase involved in the degradation of cellulosic biomass. Active on lichenan. This chain is Probable glucan 1,3-beta-glucosidase D (exgD), found in Aspergillus flavus (strain ATCC 200026 / FGSC A1120 / IAM 13836 / NRRL 3357 / JCM 12722 / SRRC 167).